The primary structure comprises 139 residues: MTGKNVYFQSQLEAFHCLQYELFPSRLTINLLVTTHIPFPQTKPHIARCVFTESSKILLGLWVQDGECSEIMTGAWSCRALRRKSRNLFSEQLKIIPKDLHFRNTMLSSCIRNQLGGPFLLEVENNERLNYRSGEGRQL.

This is an uncharacterized protein from Homo sapiens (Human).